Here is a 222-residue protein sequence, read N- to C-terminus: Uracil-DNA glycosylase (222 aa).

D61 acts as the Proton acceptor in catalysis.

The protein belongs to the uracil-DNA glycosylase (UDG) superfamily. UNG family.

It localises to the cytoplasm. The enzyme catalyses Hydrolyzes single-stranded DNA or mismatched double-stranded DNA and polynucleotides, releasing free uracil.. Excises uracil residues from the DNA which can arise as a result of misincorporation of dUMP residues by DNA polymerase or due to deamination of cytosine. This Aeromonas hydrophila subsp. hydrophila (strain ATCC 7966 / DSM 30187 / BCRC 13018 / CCUG 14551 / JCM 1027 / KCTC 2358 / NCIMB 9240 / NCTC 8049) protein is Uracil-DNA glycosylase.